A 338-amino-acid polypeptide reads, in one-letter code: MLARAGEVGRAGPAIRWLGGIGAVIPLLALVLVLVVLVIEAMGAIRLNGLHFFTATEWNPGNTYGETVVTDGVAHPVGAYYGALPLIVGTLATSAIALIIAVPVSVGAALVIVERLPKRLAEAVGIVLELLAGIPSVVVGLWGAMTFGPFIAHHIAPVIAHNAPDVPVLNYLRGDPGNGEGMLVSGLVLAVMVVPIIATTTHDLFRQVPVLPREGAIALGMSNWECVRRVTLPWVSSGIVGAVVLGLGRALGETMAVAMVSGAVLGAMPANIYATMTTIAATIVSQLDSAMTDSTNFAVKTLAEVGLVLMVITLLTNVAARGMVRRVSRTALPVGRGI.

8 consecutive transmembrane segments (helical) span residues 19–39, 93–113, 123–143, 144–164, 181–201, 232–252, 254–274, and 295–315; these read GGIG…VLVI, TSAI…LVIV, AVGI…GLWG, AMTF…HNAP, GMLV…ATTT, LPWV…RALG, TMAV…NIYA, and TNFA…ITLL. The region spanning 87–320 is the ABC transmembrane type-1 domain; sequence IVGTLATSAI…VITLLTNVAA (234 aa).

Belongs to the binding-protein-dependent transport system permease family. CysTW subfamily.

Its subcellular location is the cell membrane. Part of the binding-protein-dependent transport system for phosphate; probably responsible for the translocation of the substrate across the membrane. The sequence is that of Phosphate transport system permease protein PstC 1 (pstC1) from Mycobacterium bovis (strain ATCC BAA-935 / AF2122/97).